A 287-amino-acid polypeptide reads, in one-letter code: Large ribosomal subunit protein uL2 (287 aa).

Residues 221–287 (RGSVMNPCDH…SKRSRGGRDS (67 aa)) form a disordered region. Basic residues predominate over residues 258–287 (KTRKRNKPSNRFVLRKRRRTSKRSRGGRDS).

It belongs to the universal ribosomal protein uL2 family. Part of the 50S ribosomal subunit. Forms a bridge to the 30S subunit in the 70S ribosome.

Functionally, one of the primary rRNA binding proteins. Required for association of the 30S and 50S subunits to form the 70S ribosome, for tRNA binding and peptide bond formation. It has been suggested to have peptidyltransferase activity; this is somewhat controversial. Makes several contacts with the 16S rRNA in the 70S ribosome. In Prochlorococcus marinus (strain MIT 9313), this protein is Large ribosomal subunit protein uL2.